The sequence spans 421 residues: Testin (421 aa).

A PET domain is found at 92-199 (MILTNPVAAK…GDVKLPREMD (108 aa)). The disordered stretch occupies residues 133 to 164 (EKQPVAGSEGAQYRKKQLAKQLPAHDQDPSKC). Residues 155–164 (PAHDQDPSKC) are compositionally biased toward basic and acidic residues. 3 consecutive LIM zinc-binding domains span residues 234-297 (YSCY…CDSE), 299-359 (PRCA…NHAV), and 362-421 (QGCH…KMMS).

The protein belongs to the prickle / espinas / testin family. Interacts via LIM domain 1 with ZYX. Interacts (via LIM domain 3) with ENAH and VASP. Interacts with ALKBH4, talin, actin, alpha-actinin, GRIP1 and PXN. Interacts (via LIM domain 2) with ACTL7A (via N-terminus). Heterodimer with ACTL7A; the heterodimer interacts with ENAH to form a heterotrimer.

Its subcellular location is the cytoplasm. It localises to the cell junction. The protein localises to the focal adhesion. In terms of biological role, scaffold protein that may play a role in cell adhesion, cell spreading and in the reorganization of the actin cytoskeleton. Plays a role in the regulation of cell proliferation. May act as a tumor suppressor. This Canis lupus familiaris (Dog) protein is Testin (TES).